Consider the following 195-residue polypeptide: CASP-like protein 1E2 (195 aa).

Residues 1 to 29 (MEVESKTSFGGMESKSKEVKVVTGGKLRP) lie on the Cytoplasmic side of the membrane. The helical transmembrane segment at 30–50 (FDLVLRVVALALTLVAAVLLG) threads the bilayer. Over 51-82 (VDKQTKVVSLQLLPTLPPMDVPVTAKWRYLSA) the chain is Extracellular. Residues 83–103 (FVYFVVSNAIACSYAALSLLL) form a helical membrane-spanning segment. The Cytoplasmic portion of the chain corresponds to 104–122 (SVGNSKGNKGLGLAITVMD). A helical membrane pass occupies residues 123–143 (LVMVALLFSSNGAAGAIGLMG). Residues 144–165 (YEGNSRVRWGKVCNVFGKFCNQ) lie on the Extracellular side of the membrane. A helical membrane pass occupies residues 166-186 (VAVALGLSFFGGLAFFLLVVM). The Cytoplasmic portion of the chain corresponds to 187 to 195 (AAFALNKRH).

This sequence belongs to the Casparian strip membrane proteins (CASP) family. As to quaternary structure, homodimer and heterodimers.

It localises to the cell membrane. This chain is CASP-like protein 1E2, found in Vitis vinifera (Grape).